A 311-amino-acid polypeptide reads, in one-letter code: Protoheme IX farnesyltransferase (311 aa).

Helical transmembrane passes span 30–50 (VVQLIVFCAAIGMLLAVPGWP), 55–75 (WGVALAASIGIWLVASAAAAF), 108–128 (FAVLLCAAGMAVLWVWVNALT), 129–149 (MWLTFATFVGYAVIYTVLLKP), 153–173 (QNIVIGGASGAMPPVLGWAAM), 182–202 (WILCLIIFLWTPPHFWALALY), 233–253 (FVLFAATLLPFVYGMSGWFYL), and 287–307 (IWHLSLLFAALLLDHYLGPLL).

The protein belongs to the UbiA prenyltransferase family. Protoheme IX farnesyltransferase subfamily.

It localises to the cell inner membrane. The enzyme catalyses heme b + (2E,6E)-farnesyl diphosphate + H2O = Fe(II)-heme o + diphosphate. It functions in the pathway porphyrin-containing compound metabolism; heme O biosynthesis; heme O from protoheme: step 1/1. Functionally, converts heme B (protoheme IX) to heme O by substitution of the vinyl group on carbon 2 of heme B porphyrin ring with a hydroxyethyl farnesyl side group. The sequence is that of Protoheme IX farnesyltransferase from Methylibium petroleiphilum (strain ATCC BAA-1232 / LMG 22953 / PM1).